The primary structure comprises 182 residues: Molybdopterin synthase catalytic subunit (182 aa).

Substrate-binding positions include 119-120, K135, and 142-144; these read HR and KRE. The segment at 152-182 is disordered; sequence VWRANRDGAPGQRIDTAEPAVGAGSGGEIDD.

It belongs to the MoaE family. MOCS2B subfamily. In terms of assembly, heterotetramer; composed of 2 small (MOCS2A) and 2 large (MOCS2B) subunits.

The protein localises to the cytoplasm. It carries out the reaction 2 [molybdopterin-synthase sulfur-carrier protein]-C-terminal-Gly-aminoethanethioate + cyclic pyranopterin phosphate + H2O = molybdopterin + 2 [molybdopterin-synthase sulfur-carrier protein]-C-terminal Gly-Gly + 2 H(+). It participates in cofactor biosynthesis; molybdopterin biosynthesis. Its function is as follows. Catalytic subunit of the molybdopterin synthase complex, a complex that catalyzes the conversion of precursor Z into molybdopterin. Acts by mediating the incorporation of 2 sulfur atoms from thiocarboxylated MOCS2A into precursor Z to generate a dithiolene group. The protein is Molybdopterin synthase catalytic subunit of Pyricularia oryzae (strain 70-15 / ATCC MYA-4617 / FGSC 8958) (Rice blast fungus).